Here is an 808-residue protein sequence, read N- to C-terminus: Putative minor structural protein VP5 (808 aa).

The protein resides in the virion. The sequence is that of Putative minor structural protein VP5 from Rice ragged stunt virus (isolate Thailand) (RRSV).